Here is a 284-residue protein sequence, read N- to C-terminus: 4-diphosphocytidyl-2-C-methyl-D-erythritol kinase (284 aa).

Residue lysine 14 is part of the active site. Position 98–108 (98–108 (PMGGGLGGGSS)) interacts with ATP. Aspartate 140 is an active-site residue.

The protein belongs to the GHMP kinase family. IspE subfamily.

The catalysed reaction is 4-CDP-2-C-methyl-D-erythritol + ATP = 4-CDP-2-C-methyl-D-erythritol 2-phosphate + ADP + H(+). It participates in isoprenoid biosynthesis; isopentenyl diphosphate biosynthesis via DXP pathway; isopentenyl diphosphate from 1-deoxy-D-xylulose 5-phosphate: step 3/6. Catalyzes the phosphorylation of the position 2 hydroxy group of 4-diphosphocytidyl-2C-methyl-D-erythritol. This chain is 4-diphosphocytidyl-2-C-methyl-D-erythritol kinase, found in Shewanella pealeana (strain ATCC 700345 / ANG-SQ1).